Consider the following 315-residue polypeptide: Putative pyruvate, phosphate dikinase regulatory protein (315 aa).

Residues 1–32 (MGPFGARASPEAGQVVKQPLTDDPQESLAQGE) are disordered. Residue 189–196 (GVSRTSKT) coordinates ADP.

Belongs to the pyruvate, phosphate/water dikinase regulatory protein family. PDRP subfamily.

It catalyses the reaction N(tele)-phospho-L-histidyl/L-threonyl-[pyruvate, phosphate dikinase] + ADP = N(tele)-phospho-L-histidyl/O-phospho-L-threonyl-[pyruvate, phosphate dikinase] + AMP + H(+). The enzyme catalyses N(tele)-phospho-L-histidyl/O-phospho-L-threonyl-[pyruvate, phosphate dikinase] + phosphate + H(+) = N(tele)-phospho-L-histidyl/L-threonyl-[pyruvate, phosphate dikinase] + diphosphate. Functionally, bifunctional serine/threonine kinase and phosphorylase involved in the regulation of the pyruvate, phosphate dikinase (PPDK) by catalyzing its phosphorylation/dephosphorylation. This Caulobacter vibrioides (strain ATCC 19089 / CIP 103742 / CB 15) (Caulobacter crescentus) protein is Putative pyruvate, phosphate dikinase regulatory protein.